The following is a 1170-amino-acid chain: Thrombospondin-2 (1170 aa).

Positions 1 to 18 are cleaved as a signal peptide; sequence MLWPLLLLALWAWPSAQA. One can recognise a Laminin G-like domain in the interval 19–215; sequence GDQDEDTAFD…LQNVYLVFEN (197 aa). Residues 19-232 form a heparin-binding region; it reads GDQDEDTAFD…KKGCQQSQGA (214 aa). N-linked (GlcNAc...) asparagine glycans are attached at residues N151, N316, and N330. The 58-residue stretch at 318–375 folds into the VWFC domain; it reads SACWQDGRFFAENETWVVDSCTKCTCKKFKTVCHQISCPPATCADPWFVEGECCPSCV. 3 TSP type-1 domains span residues 379–429, 435–490, and 492–547; these read EEGW…GRCD, DGGW…PPCP, and DGRW…KSCP. 26 cysteine pairs are disulfide-bonded: C391/C423, C395/C428, C406/C413, C447/C484, C451/C489, C462/C474, C504/C541, C508/C546, C519/C531, C551/C562, C556/C572, C575/C586, C592/C608, C599/C617, C620/C644, C650/C663, C657/C676, C678/C689, C705/C713, C718/C738, C754/C774, C777/C797, C813/C833, C836/C856, C874/C894, and C910/C930. N455 carries an N-linked (GlcNAc...) asparagine glycan. The 41-residue stretch at 547 to 587 folds into the EGF-like 1 domain; it reads PIDGCLSNPCFPGAECSSFPDGSWSCGSCPGGFLGNGTHCE. A glycan (N-linked (GlcNAc...) asparagine) is linked at N582. Residues 646–690 enclose the EGF-like 2 domain; sequence PENPCKDKTHSCHRHAECIYLGHFSDPMYKCECQTGYAGDGLICG. TSP type-3 repeat units follow at residues 691–726, 727–762, 763–785, 786–821, 822–844, 845–882, 883–918, and 919–954; these read EDSDLDGWPNKNLVCATNATYHCVKDNCPLLPNSGQ, EDFDKDGIGDACDDDDDNDGVSDEKDNCQLLFNPRQ, FDYDKDEVGDRCDNCPYVHNPAQ, IDTDNNGEGDACSVDIDGDDVFNERDNCPYVYNTDQ, RDTDGDGVGDHCDNCPLVHNPDQ, TDVDNDLVGDQCDNNEDIDEDGHQNNQDNCPHIPNANQ, ADHDRDGQGDACDSDDDNDGIPDDRDNCRLVANPDQ, and EDSDGDRRGDACKDDFDNDSIPDIDDVCPENNAISE. The N-linked (GlcNAc...) asparagine glycan is linked to N708. Positions 731–750 are disordered; that stretch reads KDGIGDACDDDDDNDGVSDE. Residues 737-747 show a composition bias toward acidic residues; that stretch reads ACDDDDDNDGV. Residues 841–944 form a disordered region; the sequence is NPDQTDVDND…DNDSIPDIDD (104 aa). Composition is skewed to acidic residues over residues 845–864 and 894–903; these read TDVDNDLVGDQCDNNEDIDE and CDSDDDNDGI. Residues 923–933 show a composition bias toward basic and acidic residues; the sequence is GDRRGDACKDD. Residues 926-928 carry the Cell attachment site motif; it reads RGD. Positions 934-944 are enriched in acidic residues; the sequence is FDNDSIPDIDD. N-linked (GlcNAc...) asparagine glycans are attached at residues N936 and N1067. C946 and C1167 are disulfide-bonded. Positions 958-1170 constitute a TSP C-terminal domain; that stretch reads RNFQMVHLDP…SDLKYECRDV (213 aa).

It belongs to the thrombospondin family. As to quaternary structure, homotrimer; disulfide-linked. Can bind to fibrinogen, fibronectin, laminin and type V collagen. Interacts (via the TSP type I repeats) with CD36; the interaction conveys an antiangiogenic effect. Interacts (via the TSP type I repeats) with HRG; the interaction blocks the antiangiogenic effect of THBS2 with CD36.

Adhesive glycoprotein that mediates cell-to-cell and cell-to-matrix interactions. Ligand for CD36 mediating antiangiogenic properties. This Bos taurus (Bovine) protein is Thrombospondin-2 (THBS2).